Reading from the N-terminus, the 353-residue chain is UPF0283 membrane protein YcjF (353 aa).

Positions 1-19 (MSEPLKPRIDFAEPLKEEP) are enriched in basic and acidic residues. A disordered region spans residues 1–35 (MSEPLKPRIDFAEPLKEEPTSAFKAQQTFSEAESR). Helical transmembrane passes span 70–90 (MVMG…LQWT), 100–120 (VALG…GSVV), and 213–233 (ESTL…FIAW).

The protein belongs to the UPF0283 family.

It is found in the cell inner membrane. In Salmonella choleraesuis (strain SC-B67), this protein is UPF0283 membrane protein YcjF.